Here is a 590-residue protein sequence, read N- to C-terminus: Zinc finger protein 703 (590 aa).

Residues 1–14 (MSDSPAGSNPRTPE) show a composition bias toward polar residues. 3 disordered regions span residues 1-43 (MSDS…DPLR), 96-293 (CSQI…AGHV), and 341-366 (LVGG…LTGA). Residue Ser2 is modified to N-acetylserine. Composition is skewed to low complexity over residues 27–37 (PAVPAAVSLLP), 128–139 (RSAPGAASAAAA), 171–189 (GSSS…PGDK), and 207–219 (APVS…SSPG). Residues 241–251 (ELDKKDQEPKP) are compositionally biased toward basic and acidic residues. Ser252 is modified (phosphoserine). Gly residues-rich tracts occupy residues 260 to 273 (RGGG…GGAE) and 341 to 352 (LVGGQLSGGLGL). A C2H2-type zinc finger spans residues 456–484 (HSCNWVAASGPCDKRFATSEELLSHLRTH). Arg580 is subject to Omega-N-methylarginine.

The protein belongs to the Elbow/Noc family. As to quaternary structure, interacts with TLE4; increases transcriptional repression. Interacts with DCAF7 and PHB2. May interact with HSPD1. Expressed in mammary epithelium.

It is found in the nucleus. Its subcellular location is the cytoplasm. Transcriptional corepressor which does not bind directly to DNA and may regulate transcription through recruitment of histone deacetylases to gene promoters. Regulates cell adhesion, migration and proliferation. May be required for segmental gene expression during hindbrain development. The sequence is that of Zinc finger protein 703 (ZNF703) from Homo sapiens (Human).